The chain runs to 65 residues: Large ribosomal subunit protein bL35 (65 aa).

Positions 1-16 are enriched in basic residues; it reads MPKMKTHRASAKRFKK. Residues 1-24 are disordered; it reads MPKMKTHRASAKRFKKTANGGLKS.

It belongs to the bacterial ribosomal protein bL35 family.

The chain is Large ribosomal subunit protein bL35 from Leuconostoc mesenteroides subsp. mesenteroides (strain ATCC 8293 / DSM 20343 / BCRC 11652 / CCM 1803 / JCM 6124 / NCDO 523 / NBRC 100496 / NCIMB 8023 / NCTC 12954 / NRRL B-1118 / 37Y).